The following is a 413-amino-acid chain: Glutamyl-tRNA reductase (413 aa).

Substrate is bound by residues 57 to 60 (TCNR), Ser-113, 118 to 120 (DFE), and Gln-124. The Nucleophile role is filled by Cys-58. 193–198 (GTGKIG) serves as a coordination point for NADP(+).

This sequence belongs to the glutamyl-tRNA reductase family. Homodimer.

It carries out the reaction (S)-4-amino-5-oxopentanoate + tRNA(Glu) + NADP(+) = L-glutamyl-tRNA(Glu) + NADPH + H(+). Its pathway is porphyrin-containing compound metabolism; protoporphyrin-IX biosynthesis; 5-aminolevulinate from L-glutamyl-tRNA(Glu): step 1/2. Functionally, catalyzes the NADPH-dependent reduction of glutamyl-tRNA(Glu) to glutamate 1-semialdehyde (GSA). This is Glutamyl-tRNA reductase from Flavobacterium psychrophilum (strain ATCC 49511 / DSM 21280 / CIP 103535 / JIP02/86).